Consider the following 296-residue polypeptide: Ribonuclease HIII (296 aa).

The 216-residue stretch at Q81–R296 folds into the RNase H type-2 domain. Positions 87, 88, and 190 each coordinate a divalent metal cation.

Belongs to the RNase HII family. RnhC subfamily. Requires Mn(2+) as cofactor. The cofactor is Mg(2+).

It localises to the cytoplasm. It carries out the reaction Endonucleolytic cleavage to 5'-phosphomonoester.. In terms of biological role, endonuclease that specifically degrades the RNA of RNA-DNA hybrids. In Streptococcus gordonii (strain Challis / ATCC 35105 / BCRC 15272 / CH1 / DL1 / V288), this protein is Ribonuclease HIII.